The sequence spans 479 residues: Ribosomal RNA small subunit methyltransferase F (479 aa).

S-adenosyl-L-methionine-binding positions include 125–131 (AAAPGSK), Glu149, Asp176, and Asp194. Cys247 (nucleophile) is an active-site residue.

This sequence belongs to the class I-like SAM-binding methyltransferase superfamily. RsmB/NOP family.

The protein resides in the cytoplasm. The catalysed reaction is cytidine(1407) in 16S rRNA + S-adenosyl-L-methionine = 5-methylcytidine(1407) in 16S rRNA + S-adenosyl-L-homocysteine + H(+). Its function is as follows. Specifically methylates the cytosine at position 1407 (m5C1407) of 16S rRNA. The protein is Ribosomal RNA small subunit methyltransferase F of Salmonella paratyphi B (strain ATCC BAA-1250 / SPB7).